Here is a 68-residue protein sequence, read N- to C-terminus: Large ribosomal subunit protein bL35 (68 aa).

The segment covering 1–25 (MGTKIKTHKGTKKRFRLSAKGKAMH) has biased composition (basic residues). Residues 1-43 (MGTKIKTHKGTKKRFRLSAKGKAMHRQSGTSHLAKGLSKKRRR) are disordered.

The protein belongs to the bacterial ribosomal protein bL35 family.

The polypeptide is Large ribosomal subunit protein bL35 (Rhodopirellula baltica (strain DSM 10527 / NCIMB 13988 / SH1)).